The following is a 453-amino-acid chain: Validoxylamine A glucosyltransferase (453 aa).

It belongs to the glycosyltransferase 2 family. It depends on Mn(2+) as a cofactor.

The catalysed reaction is validoxylamine A + UDP-alpha-D-glucose = validamycin A + UDP + H(+). In terms of biological role, involved in the biosynthesis of the antifungal agent validamycin A. Catalyzes the final attachment of glucose from UDP-alpha-D-glucose to validoxylamine A to yield validamycin A. In Streptomyces hygroscopicus subsp. limoneus, this protein is Validoxylamine A glucosyltransferase.